We begin with the raw amino-acid sequence, 364 residues long: tRNA 2-selenouridine synthase (364 aa).

Residues 14 to 137 form the Rhodanese domain; it reads LLADTPLIDV…LRQTAIQATW (124 aa). The active-site S-selanylcysteine intermediate is C97.

The protein belongs to the SelU family. Monomer.

It catalyses the reaction 5-methylaminomethyl-2-thiouridine(34) in tRNA + selenophosphate + (2E)-geranyl diphosphate + H2O + H(+) = 5-methylaminomethyl-2-selenouridine(34) in tRNA + (2E)-thiogeraniol + phosphate + diphosphate. The catalysed reaction is 5-methylaminomethyl-2-thiouridine(34) in tRNA + (2E)-geranyl diphosphate = 5-methylaminomethyl-S-(2E)-geranyl-thiouridine(34) in tRNA + diphosphate. It carries out the reaction 5-methylaminomethyl-S-(2E)-geranyl-thiouridine(34) in tRNA + selenophosphate + H(+) = 5-methylaminomethyl-2-(Se-phospho)selenouridine(34) in tRNA + (2E)-thiogeraniol. The enzyme catalyses 5-methylaminomethyl-2-(Se-phospho)selenouridine(34) in tRNA + H2O = 5-methylaminomethyl-2-selenouridine(34) in tRNA + phosphate. Its function is as follows. Involved in the post-transcriptional modification of the uridine at the wobble position (U34) of tRNA(Lys), tRNA(Glu) and tRNA(Gln). Catalyzes the conversion of 2-thiouridine (S2U-RNA) to 2-selenouridine (Se2U-RNA). Acts in a two-step process involving geranylation of 2-thiouridine (S2U) to S-geranyl-2-thiouridine (geS2U) and subsequent selenation of the latter derivative to 2-selenouridine (Se2U) in the tRNA chain. The sequence is that of tRNA 2-selenouridine synthase from Salmonella enteritidis PT4 (strain P125109).